Reading from the N-terminus, the 275-residue chain is Bis(5'-nucleosyl)-tetraphosphatase, symmetrical (275 aa).

This sequence belongs to the Ap4A hydrolase family.

The enzyme catalyses P(1),P(4)-bis(5'-adenosyl) tetraphosphate + H2O = 2 ADP + 2 H(+). Functionally, hydrolyzes diadenosine 5',5'''-P1,P4-tetraphosphate to yield ADP. This Haemophilus influenzae (strain PittEE) protein is Bis(5'-nucleosyl)-tetraphosphatase, symmetrical.